A 132-amino-acid polypeptide reads, in one-letter code: Myelin P2 protein (132 aa).

Ser2 carries the post-translational modification N-acetylserine. Arg107 is a binding site for (9Z)-octadecenoate. Arg107 provides a ligand contact to hexadecanoate. Residues Cys118 and Cys125 are joined by a disulfide bond. 127–129 is a binding site for (9Z)-octadecenoate; it reads RIY. 127 to 129 lines the hexadecanoate pocket; sequence RIY.

This sequence belongs to the calycin superfamily. Fatty-acid binding protein (FABP) family. As to quaternary structure, monomer.

It localises to the cytoplasm. In terms of biological role, may play a role in lipid transport protein in Schwann cells. May bind cholesterol. In Bos taurus (Bovine), this protein is Myelin P2 protein (PMP2).